The primary structure comprises 417 residues: Imidazolonepropionase (417 aa).

Residues His-77 and His-79 each contribute to the Fe(3+) site. Positions 77 and 79 each coordinate Zn(2+). The 4-imidazolone-5-propanoate site is built by Arg-86, Tyr-149, and His-182. Residue Tyr-149 participates in N-formimidoyl-L-glutamate binding. Position 247 (His-247) interacts with Fe(3+). His-247 serves as a coordination point for Zn(2+). Gln-250 contributes to the 4-imidazolone-5-propanoate binding site. Position 322 (Asp-322) interacts with Fe(3+). Asp-322 provides a ligand contact to Zn(2+). Residues Asn-324 and Gly-326 each contribute to the N-formimidoyl-L-glutamate site. A 4-imidazolone-5-propanoate-binding site is contributed by Thr-327.

It belongs to the metallo-dependent hydrolases superfamily. HutI family. Zn(2+) is required as a cofactor. Fe(3+) serves as cofactor.

It is found in the cytoplasm. It catalyses the reaction 4-imidazolone-5-propanoate + H2O = N-formimidoyl-L-glutamate. It participates in amino-acid degradation; L-histidine degradation into L-glutamate; N-formimidoyl-L-glutamate from L-histidine: step 3/3. Catalyzes the hydrolytic cleavage of the carbon-nitrogen bond in imidazolone-5-propanoate to yield N-formimidoyl-L-glutamate. It is the third step in the universal histidine degradation pathway. In Cupriavidus taiwanensis (strain DSM 17343 / BCRC 17206 / CCUG 44338 / CIP 107171 / LMG 19424 / R1) (Ralstonia taiwanensis (strain LMG 19424)), this protein is Imidazolonepropionase.